Consider the following 318-residue polypeptide: Acetyl-coenzyme A carboxylase carboxyl transferase subunit alpha (318 aa).

The region spanning 32 to 293 (DLSQEIESLE…KKALQKHLGE (262 aa)) is the CoA carboxyltransferase C-terminal domain.

It belongs to the AccA family. As to quaternary structure, acetyl-CoA carboxylase is a heterohexamer composed of biotin carboxyl carrier protein (AccB), biotin carboxylase (AccC) and two subunits each of ACCase subunit alpha (AccA) and ACCase subunit beta (AccD).

The protein resides in the cytoplasm. It catalyses the reaction N(6)-carboxybiotinyl-L-lysyl-[protein] + acetyl-CoA = N(6)-biotinyl-L-lysyl-[protein] + malonyl-CoA. It participates in lipid metabolism; malonyl-CoA biosynthesis; malonyl-CoA from acetyl-CoA: step 1/1. In terms of biological role, component of the acetyl coenzyme A carboxylase (ACC) complex. First, biotin carboxylase catalyzes the carboxylation of biotin on its carrier protein (BCCP) and then the CO(2) group is transferred by the carboxyltransferase to acetyl-CoA to form malonyl-CoA. This is Acetyl-coenzyme A carboxylase carboxyl transferase subunit alpha from Syntrophomonas wolfei subsp. wolfei (strain DSM 2245B / Goettingen).